The primary structure comprises 485 residues: D-alanine--D-alanyl carrier protein ligase (485 aa).

144–145 (TS) contributes to the ATP binding site. Aspartate 189 provides a ligand contact to D-alanine. 284 to 289 (NTYGPT) contacts ATP. D-alanine is bound at residue valine 293. Residues aspartate 365 and lysine 473 each coordinate ATP. Residue lysine 473 participates in D-alanine binding.

This sequence belongs to the ATP-dependent AMP-binding enzyme family. DltA subfamily.

It localises to the cytoplasm. The enzyme catalyses holo-[D-alanyl-carrier protein] + D-alanine + ATP = D-alanyl-[D-alanyl-carrier protein] + AMP + diphosphate. Its pathway is cell wall biogenesis; lipoteichoic acid biosynthesis. Functionally, catalyzes the first step in the D-alanylation of lipoteichoic acid (LTA), the activation of D-alanine and its transfer onto the D-alanyl carrier protein (Dcp) DltC. In an ATP-dependent two-step reaction, forms a high energy D-alanyl-AMP intermediate, followed by transfer of the D-alanyl residue as a thiol ester to the phosphopantheinyl prosthetic group of the Dcp. D-alanylation of LTA plays an important role in modulating the properties of the cell wall in Gram-positive bacteria, influencing the net charge of the cell wall. This Staphylococcus aureus (strain Mu3 / ATCC 700698) protein is D-alanine--D-alanyl carrier protein ligase.